A 477-amino-acid polypeptide reads, in one-letter code: E3 ubiquitin-protein ligase TRIM17 (477 aa).

An RING-type zinc finger spans residues 16-66 (CSICLDYFTDPVMTACGHNFCRECIQMSWEKGKGKKGKKKQKGSFPCPECR). Residues 94–135 (HKRDLCQIHQEPLKLFCQDDQTPICVVCREAQEHRMHRVLPL) form a B box-type zinc finger. Positions 99, 102, 121, and 127 each coordinate Zn(2+). Residues 135-225 (LDEAAREYKL…GKLQDSKASL (91 aa)) adopt a coiled-coil conformation. The region spanning 276 to 475 (AIKTVCRVPG…MVISTVTMWV (200 aa)) is the B30.2/SPRY domain.

It belongs to the TRIM/RBCC family. As to quaternary structure, interacts (via coiled coil) with TRIM44 (via coiled coil). Interacts with TRIM28; this interaction prevents TRIM28 activity on BCL2A1. Interacts with TRIM41; this interaction prevents TRIM41 activity on ZSCAN2. Interacts with BECN1. Interacts with NFATC3 and NFATC4; these interactions prevent NFATC3 and NFATC4 nuclear localization. In terms of processing, auto-ubiquitinated. Expressed almost exclusively in the testis.

It is found in the cytoplasm. The protein localises to the lysosome. The enzyme catalyses S-ubiquitinyl-[E2 ubiquitin-conjugating enzyme]-L-cysteine + [acceptor protein]-L-lysine = [E2 ubiquitin-conjugating enzyme]-L-cysteine + N(6)-ubiquitinyl-[acceptor protein]-L-lysine.. It participates in protein modification; protein ubiquitination. Its function is as follows. E3 ubiquitin ligase that plays important roles in the regulation of neuronal apoptosis, selective autophagy or cell proliferation. Stimulates the degradation of kinetochore ZW10 interacting protein ZWINT in a proteasome-dependent manner, leading to negative regulation of cell proliferation. Inhibits autophagic degradation of diverse known targets while contributing to autophagy of midbodies. Autophagy-inhibitory activity involves MCL1, which TRIM17 assembles into complexes with the key autophagy regulator BECN1. Controls neuronal apoptosis by mediating ubiquitination and degradation of MCL1 to initiate neuronal death. In addition, regulates NFAT transcription factors NFATC3 and NFATC4 activities by preventing their nuclear localization, thus inhibiting their transcriptional activities. Decreases TRIM41-mediated degradation of ZSCAN2 thereby stimulating alpha-synuclein/SNCA transcription in neuronal cells. Prevents the E3 ubiquitin-ligase activity of TRIM28 and its interaction with anti-apoptotic BCL2A1, blocking TRIM28 from ubiquitinating BCL2A1. The protein is E3 ubiquitin-protein ligase TRIM17 (Trim17) of Rattus norvegicus (Rat).